We begin with the raw amino-acid sequence, 39 residues long: Photosystem II reaction center protein L (39 aa).

Residues 18–38 (SLYLGLLLVAVLGILFSSYFF) form a helical membrane-spanning segment.

This sequence belongs to the PsbL family. As to quaternary structure, PSII is composed of 1 copy each of membrane proteins PsbA, PsbB, PsbC, PsbD, PsbE, PsbF, PsbH, PsbI, PsbJ, PsbK, PsbL, PsbM, PsbT, PsbX, PsbY, PsbZ, Psb30/Ycf12, peripheral proteins PsbO, CyanoQ (PsbQ), PsbU, PsbV and a large number of cofactors. It forms dimeric complexes.

It localises to the cellular thylakoid membrane. Its function is as follows. One of the components of the core complex of photosystem II (PSII). PSII is a light-driven water:plastoquinone oxidoreductase that uses light energy to abstract electrons from H(2)O, generating O(2) and a proton gradient subsequently used for ATP formation. It consists of a core antenna complex that captures photons, and an electron transfer chain that converts photonic excitation into a charge separation. This subunit is found at the monomer-monomer interface and is required for correct PSII assembly and/or dimerization. The protein is Photosystem II reaction center protein L of Microcystis aeruginosa (strain NIES-843 / IAM M-2473).